We begin with the raw amino-acid sequence, 211 residues long: Mediator of RNA polymerase II transcription subunit 20 (211 aa).

This sequence belongs to the Mediator complex subunit 20 family. In terms of assembly, component of the Mediator complex.

It localises to the nucleus. Component of the Mediator complex, a coactivator involved in the regulated transcription of nearly all RNA polymerase II-dependent genes. Mediator functions as a bridge to convey information from gene-specific regulatory proteins to the basal RNA polymerase II transcription machinery. Mediator is recruited to promoters by direct interactions with regulatory proteins and serves as a scaffold for the assembly of a functional preinitiation complex with RNA polymerase II and the general transcription factors. In Gallus gallus (Chicken), this protein is Mediator of RNA polymerase II transcription subunit 20 (MED20).